The chain runs to 39 residues: Cytochrome b559 subunit beta (39 aa).

A helical membrane pass occupies residues 14 to 30 (WLTVHGLAVPTVSFLGS). H18 lines the heme pocket.

It belongs to the PsbE/PsbF family. Heterodimer of an alpha subunit and a beta subunit. PSII is composed of 1 copy each of membrane proteins PsbA, PsbB, PsbC, PsbD, PsbE, PsbF, PsbH, PsbI, PsbJ, PsbK, PsbL, PsbM, PsbT, PsbX, PsbY, PsbZ, Psb30/Ycf12, at least 3 peripheral proteins of the oxygen-evolving complex and a large number of cofactors. It forms dimeric complexes. The cofactor is heme b.

It is found in the plastid. It localises to the chloroplast thylakoid membrane. This b-type cytochrome is tightly associated with the reaction center of photosystem II (PSII). PSII is a light-driven water:plastoquinone oxidoreductase that uses light energy to abstract electrons from H(2)O, generating O(2) and a proton gradient subsequently used for ATP formation. It consists of a core antenna complex that captures photons, and an electron transfer chain that converts photonic excitation into a charge separation. In Lactuca sativa (Garden lettuce), this protein is Cytochrome b559 subunit beta.